A 443-amino-acid polypeptide reads, in one-letter code: MIKKLPTSPKIGMVSLGCPKALVDSERILTKLRSEGYNLSSQYDEADVVLVNTCGFIDSAKEESLDAIGEAMAENGRVIVTGCLGNEANRIRERFPDILAITGAQQYEEVVSAVHDAAPIEASPYVDLVPEQGLKLTPRHYSYLKISEGCNHRCSFCIIPSLRGDLVSRRADAILREAEKLVAAGTKELLVIGQDSSAYGVDLRHQEYRWKDRMVKADLTDLARGLGELGAWVRLHYVYPYPHVDNLIPLMAEGLILPYLDIPFQHASPSVLKRMKRPANEVKILDRLTKWREIVPDIALRSSFVVGFPGETEQDFQYLLDWLDEAQLDRVGAFRFEAVEGAAANAFDGAVPEEVKNERYQRLMEKAAQISEAKLQAKIGRDIATIIDRTDGEGGASGRSYADAPEIDGEVHLRDADNLKIGDIVTVRVEDADEHDLFGVALS.

The 111-residue stretch at 9-119 (PKIGMVSLGC…VVSAVHDAAP (111 aa)) folds into the MTTase N-terminal domain. [4Fe-4S] cluster-binding residues include C18, C54, C83, C150, C154, and C157. A Radical SAM core domain is found at 136 to 373 (LTPRHYSYLK…MEKAAQISEA (238 aa)). Residues 376-443 (QAKIGRDIAT…EHDLFGVALS (68 aa)) form the TRAM domain.

This sequence belongs to the methylthiotransferase family. RimO subfamily. [4Fe-4S] cluster is required as a cofactor.

Its subcellular location is the cytoplasm. It catalyses the reaction L-aspartate(89)-[ribosomal protein uS12]-hydrogen + (sulfur carrier)-SH + AH2 + 2 S-adenosyl-L-methionine = 3-methylsulfanyl-L-aspartate(89)-[ribosomal protein uS12]-hydrogen + (sulfur carrier)-H + 5'-deoxyadenosine + L-methionine + A + S-adenosyl-L-homocysteine + 2 H(+). Functionally, catalyzes the methylthiolation of an aspartic acid residue of ribosomal protein uS12. The sequence is that of Ribosomal protein uS12 methylthiotransferase RimO from Zymomonas mobilis subsp. mobilis (strain ATCC 31821 / ZM4 / CP4).